The chain runs to 156 residues: Small ribosomal subunit protein uS7 (156 aa).

This sequence belongs to the universal ribosomal protein uS7 family. As to quaternary structure, part of the 30S ribosomal subunit. Contacts proteins S9 and S11.

One of the primary rRNA binding proteins, it binds directly to 16S rRNA where it nucleates assembly of the head domain of the 30S subunit. Is located at the subunit interface close to the decoding center, probably blocks exit of the E-site tRNA. This chain is Small ribosomal subunit protein uS7, found in Geotalea uraniireducens (strain Rf4) (Geobacter uraniireducens).